The primary structure comprises 365 residues: MTITGIIAEFNPFHNGHKYLLDQAEGLKIVAMSGNFMQRGEPAIVDKWTRTQMALENGADLVVELPFLVSVQAADFFGQGAMDILDRLGIDSLVFGTEEVRDYQKIADLYTEKGAEMEKFVENLPDSLSYPQKTQAMWKEFAGLDFSGNTPNHVLALAYAKAVAGRNIKLHPIQRQGAGYHSVNKDVDFASATALRQHQKDQDFLERFMPSVALFEQASKVIWEDYFPLLRYQILSNPDLTTIYQVNQEMAVRIKEAIKTAQSVEELVELVTTKRYTKARVRRLLTYILMQARESDLPEAIHVLGFTEKGRQHLKSLKGQVSLVSRIGKEPWDAMTQKADQIYQLGKPSIAEQNFGRVPIRIETN.

ATP contacts are provided by residues 7 to 20 (IAEFNPFHNGHKYL), G96, N152, and R175.

It belongs to the TmcAL family.

Its subcellular location is the cytoplasm. It carries out the reaction cytidine(34) in elongator tRNA(Met) + acetate + ATP = N(4)-acetylcytidine(34) in elongator tRNA(Met) + AMP + diphosphate. Catalyzes the formation of N(4)-acetylcytidine (ac(4)C) at the wobble position of elongator tRNA(Met), using acetate and ATP as substrates. First activates an acetate ion to form acetyladenylate (Ac-AMP) and then transfers the acetyl group to tRNA to form ac(4)C34. The protein is tRNA(Met) cytidine acetate ligase of Streptococcus pneumoniae serotype 4 (strain ATCC BAA-334 / TIGR4).